The primary structure comprises 2144 residues: HEAT repeat-containing protein 1 (2144 aa).

N-acetylmethionine is present on M1. T2 carries the post-translational modification N-acetylthreonine; in HEAT repeat-containing protein 1, N-terminally processed. Position 516 is a phosphoserine (S516). An HEAT 1 repeat occupies 913 to 951 (ASISSPVVTSLLINLGSPVKEVRRAAIQCLQALSGVASP). The disordered stretch occupies residues 1170-1191 (KAKPLGTVQQKRRQKMQQKKSQ). S1190 carries the post-translational modification Phosphoserine. Residues 1347–1385 (NKTVKMVIPALIQSDSGDSIEVSRNVEEIVVKIISVFVD) form an HEAT 2 repeat. S1492 is subject to Phosphoserine. HEAT repeat units lie at residues 1594–1632 (LLPT…QNIS), 1730–1770 (IPQL…VVET), and 2100–2138 (IVLL…VLGE).

The protein belongs to the HEATR1/UTP10 family. As to quaternary structure, part of the small subunit (SSU) processome, composed of more than 70 proteins and the RNA chaperone small nucleolar RNA (snoRNA) U3. Interacts with MYC; the interaction is required for localization of MYC to the nucleolus.

The protein localises to the nucleus. It localises to the nucleolus. Ribosome biogenesis factor; required for recruitment of Myc to nucleoli. Involved in nucleolar processing of pre-18S ribosomal RNA. Required for optimal pre-ribosomal RNA transcription by RNA polymerase I. Part of the small subunit (SSU) processome, first precursor of the small eukaryotic ribosomal subunit. During the assembly of the SSU processome in the nucleolus, many ribosome biogenesis factors, an RNA chaperone and ribosomal proteins associate with the nascent pre-rRNA and work in concert to generate RNA folding, modifications, rearrangements and cleavage as well as targeted degradation of pre-ribosomal RNA by the RNA exosome. Involved in neuronal-lineage cell proliferation. The chain is HEAT repeat-containing protein 1 from Homo sapiens (Human).